Here is a 141-residue protein sequence, read N- to C-terminus: Lutropin subunit beta (141 aa).

The N-terminal stretch at 1–20 is a signal peptide; it reads MERLQGLLLWLLLSPSVVWA. 5 disulfide bridges follow: cysteine 29-cysteine 77, cysteine 43-cysteine 92, cysteine 54-cysteine 108, cysteine 58-cysteine 110, and cysteine 113-cysteine 120. An N-linked (GlcNAc...) asparagine glycan is attached at asparagine 33.

The protein belongs to the glycoprotein hormones subunit beta family. In terms of assembly, heterodimer of a common alpha chain and a unique beta chain which confers biological specificity to thyrotropin, lutropin, follitropin and gonadotropin.

The protein localises to the secreted. In terms of biological role, promotes spermatogenesis and ovulation by stimulating the testes and ovaries to synthesize steroids. The sequence is that of Lutropin subunit beta (Lhb) from Mus musculus (Mouse).